The chain runs to 1371 residues: Pleckstrin homology-like domain family B member 1 (1371 aa).

Ser51 carries the post-translational modification Phosphoserine. In terms of domain architecture, FHA spans 64-125 (TVIGSAARDI…LTQGCMLCLG (62 aa)). Arg131 carries the asymmetric dimethylarginine modification. The segment at 153-182 (GPTYNPGSAESESLVNGNHTAQPATRAPSA) is disordered. A compositionally biased stretch (polar residues) spans 157–175 (NPGSAESESLVNGNHTAQP). A phosphoserine mark is found at Ser192, Ser220, and Ser223. Disordered stretches follow at residues 211-336 (AAGK…TDSP) and 368-573 (PSSG…RVPI). 2 stretches are compositionally biased toward low complexity: residues 252-273 (SPAF…HSPS) and 296-312 (LQPP…SDSP). Phosphoserine is present on residues Ser325 and Ser335. Residues 368–377 (PSSGARSQPA) show a composition bias toward polar residues. 8 positions are modified to phosphoserine: Ser382, Ser405, Ser431, Ser445, Ser463, Ser472, Ser491, and Ser503. The span at 464–477 (PSLSRRALSPLPAR) shows a compositional bias: low complexity. Residues 483–493 (KLSREVAESPR) are compositionally biased toward basic and acidic residues. Arg514 bears the Omega-N-methylarginine mark. Phosphoserine is present on residues Ser520 and Ser522. Thr524 is modified (phosphothreonine). Phosphoserine occurs at positions 535, 541, 553, 557, 565, 580, 585, and 683. Polar residues predominate over residues 547 to 559 (GSLTGASPRQSPR). 2 disordered regions span residues 672–714 (ESGG…GAKH) and 942–1020 (GLAA…QNGT). Basic and acidic residues-rich tracts occupy residues 682–696 (ESME…KEEC) and 703–714 (QQEHEDAPGAKH). Positions 688–798 (DEENLKEECS…ETGIQKDRDK (111 aa)) form a coiled coil. Residues Ser976 and Ser1022 each carry the phosphoserine modification. The span at 976–997 (SPLPRTRSGPLPSSSGSSSSSS) shows a compositional bias: low complexity. Positions 1124–1143 (SMETSISTGGNSACSPDNMS) are disordered. The stretch at 1150 to 1216 (MGKIEEMEKM…QQLVEKEVKL (67 aa)) forms a coiled coil. The 104-residue stretch at 1261 to 1364 (SKVCRGYLIK…WMDVIVTGAE (104 aa)) folds into the PH domain.

This chain is Pleckstrin homology-like domain family B member 1 (Phldb1), found in Mus musculus (Mouse).